We begin with the raw amino-acid sequence, 61 residues long: Probradykinin-2 (61 aa).

The signal sequence occupies residues 1-22 (MSFLKKSLFLVLFLGLVSFSIC). Positions 23–50 (EEEKRETEEEENEDEIEEQSEEKKRFEP) are excised as a propeptide. The tract at residues 24 to 61 (EEKRETEEEENEDEIEEQSEEKKRFEPVPPGFTPFRQT) is disordered. The span at 30–42 (EEEENEDEIEEQS) shows a compositional bias: acidic residues. Pro52 is modified (4-hydroxyproline).

Belongs to the frog skin active peptide (FSAP) family. Bradykinin-related peptide subfamily. In terms of tissue distribution, expressed by the skin glands.

The protein localises to the secreted. Functionally, may produce in vitro relaxation of rat arterial smooth muscle and constriction of intestinal smooth muscle. May target bradykinin receptors (BDKRB). The protein is Probradykinin-2 of Pithecopus azureus (Orange-legged monkey tree frog).